A 334-amino-acid polypeptide reads, in one-letter code: Adenosine deaminase (334 aa).

Zn(2+)-binding residues include H16 and H18. The substrate site is built by H18, D20, and G173. H200 is a binding site for Zn(2+). The active-site Proton donor is the E203. D281 is a binding site for Zn(2+).

The protein belongs to the metallo-dependent hydrolases superfamily. Adenosine and AMP deaminases family. Adenosine deaminase subfamily. The cofactor is Zn(2+).

It carries out the reaction adenosine + H2O + H(+) = inosine + NH4(+). The catalysed reaction is 2'-deoxyadenosine + H2O + H(+) = 2'-deoxyinosine + NH4(+). Catalyzes the hydrolytic deamination of adenosine and 2-deoxyadenosine. The sequence is that of Adenosine deaminase from Clostridium acetobutylicum (strain ATCC 824 / DSM 792 / JCM 1419 / IAM 19013 / LMG 5710 / NBRC 13948 / NRRL B-527 / VKM B-1787 / 2291 / W).